The sequence spans 684 residues: Protein EXECUTER 1, chloroplastic (684 aa).

The span at 1 to 31 shows a compositional bias: polar residues; the sequence is MPSLSTPPSQNLAFSPAASATSSRLTPSSKR. A chloroplast-targeting transit peptide spans 1 to 46; that stretch reads MPSLSTPPSQNLAFSPAASATSSRLTPSSKRSFYPHRLPDPTALCR. The disordered stretch occupies residues 1–66; sequence MPSLSTPPSQ…SSSSSDDNPR (66 aa). Over residues 48-61 the composition is skewed to low complexity; sequence SSSSGSNSSSSSSS. The UVR domain occupies 127–162; it reads DRLLSVLKSQLNRAIKREDYEDAARLKVAIAATATN. Residues 278–318 are disordered; the sequence is TLTPGRFLTSPGRKEDTGNLAVESSEDEESDNSDDDSDLLE. Over residues 301 to 318 the composition is skewed to acidic residues; the sequence is SSEDEESDNSDDDSDLLE.

The protein resides in the plastid. It localises to the chloroplast. Its function is as follows. Together with EX2, enables higher plants to perceive singlet oxygen as a stress signal in plastid that activates a genetically determined nuclear stress response program which triggers a programmed cell death (PCD). This transfer of singlet oxygen-induced stress-related signals from the plastid to the nucleus that triggers genetically controlled PCD pathway is unique to photosynthetic eukaryotes and operates under mild stress conditions, impeding photosystem II (PSII) without causing photooxidative damage of the plant. The protein is Protein EXECUTER 1, chloroplastic of Arabidopsis thaliana (Mouse-ear cress).